The sequence spans 88 residues: Phage-like element PBSX protein XkdR (88 aa).

To B.subtilis YqbR.

The polypeptide is Phage-like element PBSX protein XkdR (xkdR) (Bacillus subtilis (strain 168)).